A 166-amino-acid polypeptide reads, in one-letter code: Regulatory protein RecX (166 aa).

This sequence belongs to the RecX family.

It localises to the cytoplasm. In terms of biological role, modulates RecA activity. This Shigella sonnei (strain Ss046) protein is Regulatory protein RecX.